A 288-amino-acid polypeptide reads, in one-letter code: Ribosomal RNA small subunit methyltransferase A (288 aa).

Residues asparagine 18, leucine 20, glycine 45, glutamate 66, aspartate 91, and asparagine 118 each coordinate S-adenosyl-L-methionine.

This sequence belongs to the class I-like SAM-binding methyltransferase superfamily. rRNA adenine N(6)-methyltransferase family. RsmA subfamily.

It is found in the cytoplasm. The enzyme catalyses adenosine(1518)/adenosine(1519) in 16S rRNA + 4 S-adenosyl-L-methionine = N(6)-dimethyladenosine(1518)/N(6)-dimethyladenosine(1519) in 16S rRNA + 4 S-adenosyl-L-homocysteine + 4 H(+). Its function is as follows. Specifically dimethylates two adjacent adenosines (A1518 and A1519) in the loop of a conserved hairpin near the 3'-end of 16S rRNA in the 30S particle. May play a critical role in biogenesis of 30S subunits. The polypeptide is Ribosomal RNA small subunit methyltransferase A (Pasteurella multocida (strain Pm70)).